A 657-amino-acid polypeptide reads, in one-letter code: MTQLAIGKPAPLGAHYDGQGVNFTLFSAHAERVELCVFDANGQEHRYDLPGHSGDIWHGYLPDARPGLRYGYRVHGPWQPADGHRFNPAKLLIDPCARQIDGEFKDNPLLHAGHNEPDYRDNAAIAPKCVVVVDHYDWEDDAPPRTPWGSTIIYEAHVKGLTYLHPEIPVEIRGTYKALGHPVMINYLKQLGITALELLPVAQFASEPRLQRMGLSNYWGYNPVAMFALHPAYACSPETALDEFRDAIKALHKAGIEVILDIVLNHSAELDLDGPLFSLRGIDNRSYYWIREDGDYHNWTGCGNTLNLSHPAVVDYASACLRYWVETCHVDGFRFDLAAVMGRTPEFRQDAPLFTAIQNCPVLSQVKLIAEPWDIAPGGYQVGNFPPLFAEWNDHFRDAARRFWLHYDLPLGAFAGRFAASSDVFKRNGRLPSAAINLVTAHDGFTLRDCVCFNHKHNEANGEENRDGTNNNYSNNHGKEGLGGSLDLVERRRDSIHALLTTLLLSQGTPMLLAGDEHGHSQHGNNNAYCQDNQLTWLDWSQASSGLTAFTAALIHLRKRIPALVENRWWEEGDGNVRWLNRYAQPLSTDEWQNGPKQLQILLSDRFLIAINATLEVTEIVLPAGEWHAIPPFAGEDNPVITAVWQGPAHGLCVFQR.

The active-site Nucleophile is Asp336. Glu371 acts as the Proton donor in catalysis. Basic and acidic residues predominate over residues 458–467 (NEANGEENRD). The disordered stretch occupies residues 458 to 479 (NEANGEENRDGTNNNYSNNHGK).

This sequence belongs to the glycosyl hydrolase 13 family.

It catalyses the reaction Hydrolysis of (1-&gt;6)-alpha-D-glucosidic linkages to branches with degrees of polymerization of three or four glucose residues in limit dextrin.. It functions in the pathway glycan degradation; glycogen degradation. Functionally, removes maltotriose and maltotetraose chains that are attached by 1,6-alpha-linkage to the limit dextrin main chain, generating a debranched limit dextrin. This is Glycogen debranching enzyme from Shigella boydii serotype 18 (strain CDC 3083-94 / BS512).